Here is a 724-residue protein sequence, read N- to C-terminus: WW domain-containing protein ZK1098.1 (724 aa).

WW domains lie at 78 to 111 (PSVE…KPDV) and 123 to 156 (QPQQ…KPDG). 6 FF domains span residues 224-282 (KKRQ…WKVQ), 295-349 (IKKS…CIDF), 353-422 (RDKE…HIKQ), 442-502 (QRKV…FVED), 507-562 (YTED…LIEK), and 578-632 (KRRL…YKNG). Residues 626–724 (FNHYKNGTSG…KRKRRESEAD (99 aa)) form a disordered region. The span at 630–639 (KNGTSGTTAG) shows a compositional bias: polar residues. Residues 645–657 (KKKKKKDKKKKNK) show a composition bias toward basic residues. Residues 681 to 692 (SKEDRMDDEERG) are compositionally biased toward basic and acidic residues. The segment covering 693–703 (KKSKKSRKRSP) has biased composition (basic residues).

The polypeptide is WW domain-containing protein ZK1098.1 (Caenorhabditis elegans).